Consider the following 365-residue polypeptide: 3-dehydroquinate synthase (365 aa).

Residues 72-77 (SGEKEK), 130-131 (TT), K142, and K151 contribute to the NAD(+) site. Positions 184, 247, and 264 each coordinate Zn(2+).

It belongs to the sugar phosphate cyclases superfamily. Dehydroquinate synthase family. Co(2+) serves as cofactor. Zn(2+) is required as a cofactor. The cofactor is NAD(+).

It localises to the cytoplasm. The enzyme catalyses 7-phospho-2-dehydro-3-deoxy-D-arabino-heptonate = 3-dehydroquinate + phosphate. Its pathway is metabolic intermediate biosynthesis; chorismate biosynthesis; chorismate from D-erythrose 4-phosphate and phosphoenolpyruvate: step 2/7. In terms of biological role, catalyzes the conversion of 3-deoxy-D-arabino-heptulosonate 7-phosphate (DAHP) to dehydroquinate (DHQ). This is 3-dehydroquinate synthase from Bacillus cereus (strain AH187).